The sequence spans 340 residues: MKIMVAMSGGVDSTMTAKFLQEAGHEVQGCYMMLHQKPGYHEENIRKVKKVGEYLGIKVHILDLQDKFNEYVYDPFVRLYKEGKTPNPCALCNKFIKLGALLDFAKVNGCEKLATGHYVQVVDGFITCAKDPSKDQSYFLAQVPKEVLKDVIFPLGDKFKKDIKELARGVKVLEEFATQAESSEICFVENTYIEVLNKHYNTNLPGNVVDKDGNIIGRHQGYMHYTIGKRRGFEVFGAHEPHFVIKINAEKNEIVVGTKDDLAQKVVELENVNLFIDEDKFECETKIRYRSPKLEAFVEVDKSSKTAKLTLNQNALGVAQGQLCVMYDGDRVIASGFIKN.

Residues 6–13 (AMSGGVDS) and Met-32 contribute to the ATP site. Catalysis depends on Cys-92, which acts as the Nucleophile. Cys-92 and Cys-186 are joined by a disulfide. An ATP-binding site is contributed by Gly-116. Residues 134 to 136 (KDQ) are interaction with tRNA. Cys-186 acts as the Cysteine persulfide intermediate in catalysis. An interaction with tRNA region spans residues 288–289 (RY).

Belongs to the MnmA/TRMU family.

Its subcellular location is the cytoplasm. It catalyses the reaction S-sulfanyl-L-cysteinyl-[protein] + uridine(34) in tRNA + AH2 + ATP = 2-thiouridine(34) in tRNA + L-cysteinyl-[protein] + A + AMP + diphosphate + H(+). Functionally, catalyzes the 2-thiolation of uridine at the wobble position (U34) of tRNA, leading to the formation of s(2)U34. The chain is tRNA-specific 2-thiouridylase MnmA from Campylobacter concisus (strain 13826).